The primary structure comprises 128 residues: Fluoride-specific ion channel FluC (128 aa).

The next 4 helical transmembrane spans lie at Leu-7–Arg-29, Pro-36–Ile-57, Ala-65–Glu-94, and Tyr-98–Leu-126. Asn-43 is a fluoride binding site. 2 residues coordinate Na(+): Gly-77 and Thr-80. Positions 104, 108, and 112 each coordinate fluoride.

Belongs to the fluoride channel Fluc/FEX (TC 1.A.43) family. In terms of assembly, homodimer.

It localises to the cell inner membrane. It catalyses the reaction fluoride(in) = fluoride(out). Na(+) is not transported, but it plays an essential structural role and its presence is essential for fluoride channel function. The Na(+)-binding site is specific for Na(+) over most other cations including K(+) and Mg(2+). Fluoride efflux is inhibited by Li(2+). Fluoride-specific ion channel. Important for reducing fluoride concentration in the cell, thus reducing its toxicity. Is highly specific for fluoride ions and cannot transport chloride ions. This chain is Fluoride-specific ion channel FluC, found in Bordetella pertussis (strain Tohama I / ATCC BAA-589 / NCTC 13251).